A 1427-amino-acid polypeptide reads, in one-letter code: Protein expanded (1427 aa).

Positions 26–399 constitute an FERM domain; that stretch reads RFLALRLLGQ…DTHQWSMKLA (374 aa). Residues 176–212 are disordered; sequence GDAPPGTSNSKDDSGEETSASPSNGGRGLSATTTLPK. Residues 192–211 are compositionally biased toward polar residues; that stretch reads ETSASPSNGGRGLSATTTLP. A phosphotyrosine mark is found at Y227 and Y423. Disordered stretches follow at residues 520-566 and 611-656; these read VRPQ…IGSQ and NSAL…SGVY. The segment covering 524–544 has biased composition (polar residues); sequence DASSNGATIVTNSSVQRNSMG. Low complexity predominate over residues 545–559; the sequence is TTANDSSTATDSPSS. Y679 bears the Phosphotyrosine mark. Residues 688–710 show a composition bias toward basic and acidic residues; that stretch reads EETHVQHSDSVDGKKKEDFRPRS. Disordered stretches follow at residues 688 to 732, 766 to 792, 815 to 880, 939 to 963, and 1000 to 1022; these read EETH…DNKH, YVTLPLGDQGEEEVDQPPAPPPPYSAR, APKP…SLKS, HNSNYAGGSQASLHHHHVPSHHRHS, and LAPPPPSLPRQPPPPPPPNHPHL. Y766 is modified (phosphotyrosine). Pro residues predominate over residues 818–838; sequence PDSPPCSPPVPPAPIPAPPPA. Residues 842–847 carry the RXPPXY motif motif; the sequence is RDPPPY. Polar residues predominate over residues 848-859; it reads SISSKPRPTSLI. Residues 860–877 are compositionally biased toward low complexity; sequence SVSSSAHPAPSAAGSMSS. The span at 951-963 shows a compositional bias: basic residues; sequence LHHHHVPSHHRHS. Over residues 1001–1019 the composition is skewed to pro residues; sequence APPPPSLPRQPPPPPPPNH. The SH3-binding motif lies at 1008-1020; the sequence is PRQPPPPPPPNHP. Position 1103 is a phosphotyrosine (Y1103). The SH3-binding motif lies at 1149 to 1157; sequence PPPPPPLHP. The residue at position 1181 (S1181) is a Phosphoserine. Disordered stretches follow at residues 1190-1267 and 1345-1398; these read DLLP…WAGE and TGQE…LPVQ. 2 stretches are compositionally biased toward pro residues: residues 1214–1230 and 1237–1246; these read PPMPAPSEKPPPIPSKP and PIPPRKPPTL. Composition is skewed to polar residues over residues 1253-1262 and 1345-1370; these read SPLTKTSSGA and TGQEMPTSSAQPSGATTNGVANSSAG. Over residues 1376-1388 the composition is skewed to basic residues; it reads KARKGSTVSHRHP.

In terms of assembly, forms a complex with Kibra and Mer. Interacts (via RXPPXY motif) with Kibra (via domain WW 1). Interacts with Mer and Hpo (via SARAH domain). Interacts with Schip1; the interaction results in recruitment of Schip1 to the apical cell membrane. Interacts with ack and yki. Post-translationally, phosphorylated by Ack at several tyrosines including Tyr-227, Tyr-423, Tyr-679, Tyr-766 and Tyr-1103.

It localises to the apical cell membrane. Activates the Hippo/SWH (Sav/Wts/Hpo) signaling pathway, a signaling pathway that plays a pivotal role in organ size control and tumor suppression by restricting proliferation and promoting apoptosis. The core of this pathway is composed of a kinase cascade wherein Hippo (Hpo), in complex with its regulatory protein Salvador (Sav), phosphorylates and activates Warts (Wts) in complex with its regulatory protein Mats, which in turn phosphorylates and inactivates the Yorkie (Yki) oncoprotein. Ex acts synergistically along with Mer and Kibra to regulate the Hippo signaling pathway. Involved in the control of cell proliferation in imaginal disks. May bind to certain proteins of signal transduction pathways by interaction with their SH3 domains. Required for apical localization of Schip1. The protein is Protein expanded (ex) of Drosophila melanogaster (Fruit fly).